Consider the following 240-residue polypeptide: Purine nucleoside phosphorylase DeoD-type (240 aa).

A purine D-ribonucleoside is bound at residue His-5. Phosphate is bound by residues Gly-21, Arg-25, Arg-44, and 88–91; that span reads RVGS. Residues 181-183 and 205-206 contribute to the a purine D-ribonucleoside site; these read EME and SD. Asp-206 functions as the Proton donor in the catalytic mechanism.

It belongs to the PNP/UDP phosphorylase family. As to quaternary structure, homohexamer; trimer of homodimers.

The catalysed reaction is a purine D-ribonucleoside + phosphate = a purine nucleobase + alpha-D-ribose 1-phosphate. It catalyses the reaction a purine 2'-deoxy-D-ribonucleoside + phosphate = a purine nucleobase + 2-deoxy-alpha-D-ribose 1-phosphate. In terms of biological role, catalyzes the reversible phosphorolytic breakdown of the N-glycosidic bond in the beta-(deoxy)ribonucleoside molecules, with the formation of the corresponding free purine bases and pentose-1-phosphate. In Enterobacter sp. (strain 638), this protein is Purine nucleoside phosphorylase DeoD-type.